The sequence spans 370 residues: NADH-quinone oxidoreductase subunit D 2 (370 aa).

This sequence belongs to the complex I 49 kDa subunit family. In terms of assembly, NDH-1 is composed of 14 different subunits. Subunits NuoB, C, D, E, F, and G constitute the peripheral sector of the complex.

It localises to the cell inner membrane. The enzyme catalyses a quinone + NADH + 5 H(+)(in) = a quinol + NAD(+) + 4 H(+)(out). Its function is as follows. NDH-1 shuttles electrons from NADH, via FMN and iron-sulfur (Fe-S) centers, to quinones in the respiratory chain. The immediate electron acceptor for the enzyme in this species is believed to be ubiquinone. Couples the redox reaction to proton translocation (for every two electrons transferred, four hydrogen ions are translocated across the cytoplasmic membrane), and thus conserves the redox energy in a proton gradient. This chain is NADH-quinone oxidoreductase subunit D 2, found in Solibacter usitatus (strain Ellin6076).